A 331-amino-acid polypeptide reads, in one-letter code: Pantothenate kinase (331 aa).

109–116 (GSVAVGKS) contributes to the ATP binding site.

It belongs to the prokaryotic pantothenate kinase family.

It localises to the cytoplasm. The catalysed reaction is (R)-pantothenate + ATP = (R)-4'-phosphopantothenate + ADP + H(+). It participates in cofactor biosynthesis; coenzyme A biosynthesis; CoA from (R)-pantothenate: step 1/5. The polypeptide is Pantothenate kinase (Rhizobium leguminosarum bv. trifolii (strain WSM2304)).